The primary structure comprises 586 residues: MKYILVTGGVISGIGKGIIASSIGTILKSCGLRVTAIKIDPYINIDAGTFSPYEHGEVFVLNDGGEVDLDLGNYERFLDINLYKDNNITTGKIYQHVINKERRGDYLGKTVQVVPHITDAVQEWVMNQAKVPVDGNKEEPQICVIELGGTIGDIEGMPFVEAFRQFQFKAKRENFCNIHVSLVPQLSATGEQKTKPTQNSVRALRGLGLSPDLIVCRSSTPIEMAVKEKISMFCHVNPEQVICIHDVSSTYRVPVLLEEQSIVKYFKERLHLPIGDSASNLLFKWRNMADRYERLQKICSIALVGKYTKLRDCYASVFKALEHSALAINHKLNLMYIDSIDLEKITETEDPVKFHEAWQKLCKADGILVPGGFGIRGTLGKLQAISWARTKKIPFLGVCLGMQLAVIEFARNCLNLKDADSTEFRPNAPVPLVIDMPEHNPGNLGGTMRLGIRRTVFKTENSILRKLYGDVPFIEERHRHRFEVNPNLIKQFEQNDLSFVGQDVDGDRMEIIELANHPYFVGVQFHPEFSSRPMKPSPPYLGLLLAATGNLNAYLQQGCKLSSSDRYSDASDDSFSEPRIAELEIS.

Residues 300–554 (SIALVGKYTK…LAATGNLNAY (255 aa)) form the Glutamine amidotransferase type-1 domain. Catalysis depends on for GATase activity residues cysteine 399, histidine 526, and glutamate 528. Residues 563-586 (SSDRYSDASDDSFSEPRIAELEIS) are disordered. Serine 568, serine 571, and serine 574 each carry phosphoserine.

The protein belongs to the CTP synthase family.

It carries out the reaction UTP + L-glutamine + ATP + H2O = CTP + L-glutamate + ADP + phosphate + 2 H(+). The protein operates within pyrimidine metabolism; CTP biosynthesis via de novo pathway; CTP from UDP: step 2/2. Catalyzes the ATP-dependent amination of UTP to CTP with either L-glutamine or ammonia as the source of nitrogen. Constitutes the rate-limiting enzyme in the synthesis of cytosine nucleotides. The polypeptide is CTP synthase 2 (CTPS2) (Homo sapiens (Human)).